The following is a 103-amino-acid chain: Nucleoid-associated protein Adeh_3636 (103 aa).

Belongs to the YbaB/EbfC family. As to quaternary structure, homodimer.

The protein resides in the cytoplasm. Its subcellular location is the nucleoid. In terms of biological role, binds to DNA and alters its conformation. May be involved in regulation of gene expression, nucleoid organization and DNA protection. In Anaeromyxobacter dehalogenans (strain 2CP-C), this protein is Nucleoid-associated protein Adeh_3636.